The sequence spans 312 residues: Pantothenate kinase (312 aa).

ATP is bound at residue 97–104 (GSVAVGKS).

This sequence belongs to the prokaryotic pantothenate kinase family.

The protein localises to the cytoplasm. It carries out the reaction (R)-pantothenate + ATP = (R)-4'-phosphopantothenate + ADP + H(+). The protein operates within cofactor biosynthesis; coenzyme A biosynthesis; CoA from (R)-pantothenate: step 1/5. This is Pantothenate kinase from Mycolicibacterium paratuberculosis (strain ATCC BAA-968 / K-10) (Mycobacterium paratuberculosis).